The chain runs to 409 residues: MSTNSSIKKVVLAYSGGLDTSVIVKWLQETYNCEVVTFTADIGQGEEVEPARAKAEALGVKEIYIDDLREEFVRDYVFPMFRANTIYEGEYLLGTSIARPLIAKRLIEIANETGADAISHGATGKGNDQVRFELGAYALKPGIHVIAPWRDWDLTSRETLMDYCAKHNIPVDYTKAKKKSPYSMDANLLHISYEGGILEDPWAEAEEDMWRWSVSPEAAPDQPEYLELTFKHGDIVAIDGVEMSPATVLETLNKRGGAHGVGRLDIVENRYVGMKSRGCYETPGGTIILRAHRAIESITLDREVAHLKDSLMPKYAEMIYNGYWWSPERQMLQTAIDNSQGPVNGDVRVKLYKGSVTVVGRRSNDSLFDEKIATFEDDAGAYNQKDAEGFIKLNALRMRIAAQKGRKLL.

Residues 13–21 (AYSGGLDTS) and A40 contribute to the ATP site. Y91 and S96 together coordinate L-citrulline. G121 lines the ATP pocket. L-aspartate contacts are provided by T123, N127, and D128. N127 lines the L-citrulline pocket. Positions 131, 183, 192, 268, and 280 each coordinate L-citrulline.

The protein belongs to the argininosuccinate synthase family. Type 1 subfamily. In terms of assembly, homotetramer.

The protein localises to the cytoplasm. The catalysed reaction is L-citrulline + L-aspartate + ATP = 2-(N(omega)-L-arginino)succinate + AMP + diphosphate + H(+). Its pathway is amino-acid biosynthesis; L-arginine biosynthesis; L-arginine from L-ornithine and carbamoyl phosphate: step 2/3. This is Argininosuccinate synthase from Saccharophagus degradans (strain 2-40 / ATCC 43961 / DSM 17024).